The sequence spans 438 residues: Ribosomal protein uS12 methylthiotransferase RimO (438 aa).

The region spanning 6–118 (KQLCLISLGC…IDILIAKKQN (113 aa)) is the MTTase N-terminal domain. [4Fe-4S] cluster-binding residues include C15, C49, C81, C150, C154, and C157. The Radical SAM core domain occupies 136-364 (TGSSVHAYVK…NKIALKHQHN (229 aa)).

It belongs to the methylthiotransferase family. RimO subfamily. The cofactor is [4Fe-4S] cluster.

The protein resides in the cytoplasm. It carries out the reaction L-aspartate(89)-[ribosomal protein uS12]-hydrogen + (sulfur carrier)-SH + AH2 + 2 S-adenosyl-L-methionine = 3-methylsulfanyl-L-aspartate(89)-[ribosomal protein uS12]-hydrogen + (sulfur carrier)-H + 5'-deoxyadenosine + L-methionine + A + S-adenosyl-L-homocysteine + 2 H(+). Its function is as follows. Catalyzes the methylthiolation of an aspartic acid residue of ribosomal protein uS12. The sequence is that of Ribosomal protein uS12 methylthiotransferase RimO from Helicobacter acinonychis (strain Sheeba).